The sequence spans 61 residues: Small ribosomal subunit protein uS14 (61 aa).

C24, C27, C40, and C43 together coordinate Zn(2+).

It belongs to the universal ribosomal protein uS14 family. Zinc-binding uS14 subfamily. As to quaternary structure, part of the 30S ribosomal subunit. Contacts proteins S3 and S10. It depends on Zn(2+) as a cofactor.

Functionally, binds 16S rRNA, required for the assembly of 30S particles and may also be responsible for determining the conformation of the 16S rRNA at the A site. In Acidithiobacillus ferrooxidans (strain ATCC 23270 / DSM 14882 / CIP 104768 / NCIMB 8455) (Ferrobacillus ferrooxidans (strain ATCC 23270)), this protein is Small ribosomal subunit protein uS14.